Consider the following 539-residue polypeptide: Fucosyltransferase 2 (539 aa).

At 1–5 the chain is on the cytoplasmic side; the sequence is MRITE. Residues 6–26 form a helical; Signal-anchor for type II membrane protein membrane-spanning segment; it reads ILALFMVLVPVSLVIVAMFGY. The Lumenal portion of the chain corresponds to 27 to 539; that stretch reads DQGNGFVQAS…SWGLKLVDNF (513 aa). 3 N-linked (GlcNAc...) asparagine glycosylation sites follow: Asn-44, Asn-231, and Asn-482.

It belongs to the glycosyltransferase 37 family. As to expression, expressed in roots, stems, leaves, flowers, siliques and seedlings.

The protein resides in the golgi apparatus. Its subcellular location is the golgi stack membrane. It functions in the pathway protein modification; protein glycosylation. Functionally, may be involved in cell wall biosynthesis. May act as a fucosyltransferase. The chain is Fucosyltransferase 2 (FUT2) from Arabidopsis thaliana (Mouse-ear cress).